Here is a 408-residue protein sequence, read N- to C-terminus: MSPCENDPPINWKRNLIVAWLGCFLTGAAFSLVMPFLPLYVEQLGVTGHSALNMWSGIVFSITFLFSAIASPFWGGLADRKGRKLMLLRSALGMGIVMVLMGLAQNIWQFLILRALLGLLGGFVPNANALIATQVPRNKSGWALGTLSTGGVSGALLGPMAGGLLADSYGLRPVFFITASVLILCFFVTLFCIREKFQPVSKKEMLHMREVVTSLKNPKLVLSLFVTTLIIQVATGSIAPILTLYVRELAGNVSNVAFISGMIASVPGVAALLSAPRLGKLGDRIGPEKILITALIFSVLLLIPMSYVQTPLQLGILRFLLGAADGALLPAVQTLLVYNSSNQIAGRIFSYNQSFRDIGNVTGPLMGAAISANYGFRAVFLVTAGVVLFNAVYSWNSLRRRRIPQVSN.

11 consecutive transmembrane segments (helical) span residues 16-36 (LIVA…VMPF), 58-78 (IVFS…GGLA), 92-112 (LGMG…QFLI), 115-135 (ALLG…ATQV), 146-166 (TLST…GLLA), 173-193 (PVFF…LFCI), 224-244 (LFVT…ILTL), 256-276 (VAFI…LSAP), 290-310 (ILIT…YVQT), 319-339 (FLLG…LVYN), and 378-398 (AVFL…WNSL).

The protein belongs to the major facilitator superfamily. DHA1 family. MdtG (TC 2.A.1.2.20) subfamily.

The protein resides in the cell inner membrane. Functionally, confers resistance to fosfomycin and deoxycholate. The chain is Multidrug resistance protein MdtG from Escherichia coli O7:K1 (strain IAI39 / ExPEC).